The primary structure comprises 680 residues: MIDRYKHQQLRIGSVSPQQISAWATKIIPNGEIVGEVTKPYTFHYKTNKPEKDGLFCERIFGPIKSGICACGNYRVIGDEKEDPKFCEQCGVEFVGSRIRRYQMGYIKLTCPVTHVWYLKRLPSYIANLLDKPLKELESLVYCDFSFARPITKKPTFLRLRGSFEYEIQSWKYSIPLFFTTQGFDIFRNREISTGAGAIREQLADLDLRIIIENSLVEWKLLGEEGPTGNEWEDRKIVRRKDFLVRRMELAKHFIRTNIEPEWMVLCLLPVLPPELRPIIQIEGGKLMSSDINELYRRVIYRNNTLTDLLTTSRSTPGELVMCQEKLVQEAVDTLLDNGIRGQPMKDGHNKVYKSFSDVIEGKEGRFRETLLGKRVDYSGRSVIVVGPSLSLHRCGLPREIAIELFQTFVIRGLIRQHLASNIGVAKSQIRENKPIVWEILQEVMQGHPVLLNRAPTLHRLGIQSFQPILVEGRTICLHPLVCKGFNADFDGDQMAVHVPLSLEAQAEARLLMFSHMNLLSPAIGDPISVPTQDMLIGLYVLTSATRRGICANRYNPCNRKNYQNERIYETNYKYMKEPFFCNSYDAIGAYWQKRINLDSPLWLRWQLDQRVSASREVPIEVHYESFGTYHEIYAHYLIVRSVKKETFCVYIRTTVGHISFYREIEEAIQGFSQACSYDT.

Cys69, Cys71, Cys87, and Cys90 together coordinate Zn(2+). Residues Asp489, Asp491, and Asp493 each coordinate Mg(2+).

The protein belongs to the RNA polymerase beta' chain family. RpoC1 subfamily. As to quaternary structure, in plastids the minimal PEP RNA polymerase catalytic core is composed of four subunits: alpha, beta, beta', and beta''. When a (nuclear-encoded) sigma factor is associated with the core the holoenzyme is formed, which can initiate transcription. The cofactor is Mg(2+). Zn(2+) serves as cofactor.

It localises to the plastid. The protein resides in the chloroplast. It catalyses the reaction RNA(n) + a ribonucleoside 5'-triphosphate = RNA(n+1) + diphosphate. In terms of biological role, DNA-dependent RNA polymerase catalyzes the transcription of DNA into RNA using the four ribonucleoside triphosphates as substrates. This Aethionema grandiflorum (Persian stone-cress) protein is DNA-directed RNA polymerase subunit beta'.